A 444-amino-acid chain; its full sequence is Abhydrolase domain-containing protein abhd-5.2 (444 aa).

In terms of domain architecture, AB hydrolase-1 spans 162 to 409; it reads PIVLIHGFGA…SAGHHVYADD (248 aa).

Belongs to the peptidase S33 family. ABHD4/ABHD5 subfamily. Interacts with atgl-1; the interaction tethers atgl-1 to lipid droplets. In terms of tissue distribution, expressed in the hypodermis and intestine.

The protein resides in the lipid droplet. Functionally, acts coordinately with phospholipase atgl-1 within the lipolytic cascade to distribute stored energy to tissues to maintain energy levels during the dauer phase. Localizes atgl-1 to lipid droplets, possibly to facilitate triglyceride hydrolysis. Regulates lipid droplet size, lipid content, the exchange of lipids between lipid droplets and fusion of lipid droplets during the dauer phase. The polypeptide is Abhydrolase domain-containing protein abhd-5.2 (Caenorhabditis elegans).